The following is a 111-amino-acid chain: Small ribosomal subunit protein uS10 (111 aa).

The protein belongs to the universal ribosomal protein uS10 family. In terms of assembly, part of the 30S ribosomal subunit.

Involved in the binding of tRNA to the ribosomes. This is Small ribosomal subunit protein uS10 from Xanthomonas euvesicatoria pv. vesicatoria (strain 85-10) (Xanthomonas campestris pv. vesicatoria).